The chain runs to 335 residues: MHEPAFWHRPSSLLSRLLMPVGALYGAVAARRLMRTGMRAGVPVICVGNYHVGGAGKTPTVIALAGILRSLGETPVVLSRGYGGRLHGPVHVDPHRHTAADVGDEPLMMAWTIPVIVSRQRAAGIAPARALGASVILMDDGFQNPALAKDISLIVIDRARGLGNGQVFPAGPLRAPLPPQLARTDALVIVGFGPAADDVAASIGARGGLVLPARLIPDDASVVALRGRRVYAFAGIGDPQRFFRSLRACGIDVAAERAFPDHHPFSQRDVADLQTAAERDGLTLVTTEKDLARLRNSEDLAAFAQAVVAFAVTLAFDDEAVLRSFLTDRIGRARR.

51-58 contributes to the ATP binding site; sequence HVGGAGKT.

Belongs to the LpxK family.

The enzyme catalyses a lipid A disaccharide + ATP = a lipid IVA + ADP + H(+). Its pathway is glycolipid biosynthesis; lipid IV(A) biosynthesis; lipid IV(A) from (3R)-3-hydroxytetradecanoyl-[acyl-carrier-protein] and UDP-N-acetyl-alpha-D-glucosamine: step 6/6. Transfers the gamma-phosphate of ATP to the 4'-position of a tetraacyldisaccharide 1-phosphate intermediate (termed DS-1-P) to form tetraacyldisaccharide 1,4'-bis-phosphate (lipid IVA). The protein is Tetraacyldisaccharide 4'-kinase of Nitrobacter hamburgensis (strain DSM 10229 / NCIMB 13809 / X14).